Here is a 98-residue protein sequence, read N- to C-terminus: Lipolysis-activating peptide 1-alpha chain (98 aa).

Residues 1 to 22 form the signal peptide; that stretch reads MMKLVLFGIIVILFSMIGSIHG. The region spanning 26–89 is the LCN-type CS-alpha/beta domain; the sequence is PGNYPLNTYG…IWDAVKRHCK (64 aa). 3 cysteine pairs are disulfide-bonded: Cys40–Cys63, Cys49–Cys68, and Cys53–Cys70. At Lys96 the chain carries Lysine amide.

Belongs to the long (3 C-C) scorpion toxin superfamily. In terms of assembly, monomer (edited version) and heterodimer (non-edited version) of this alpha chain and a beta chain (AC B8XGZ8). In terms of tissue distribution, expressed by the venom gland.

It is found in the secreted. Its function is as follows. The heterodimer non-edited LVP1 induces lipolysis in rat adipocytes. Induction of lipolysis by LVP1 appears to be mediated through the beta-2 adrenergic receptor pathway (ADRB2). Functionally, the edited BmKBTx-like, similar to beta-toxins, may modulate voltage-gated sodium channels (Nav) and may block voltage-gated potassium channels (Kv). This chain is Lipolysis-activating peptide 1-alpha chain, found in Buthus israelis (Israeli scorpion).